Here is a 549-residue protein sequence, read N- to C-terminus: Probable protein kinase UbiB (549 aa).

The Protein kinase domain maps to D123–L501. Residues L129–V137 and K152 each bind ATP. D287 serves as the catalytic Proton acceptor. 2 helical membrane passes run S498–Q518 and A520–W540.

Belongs to the ABC1 family. UbiB subfamily.

It is found in the cell inner membrane. It participates in cofactor biosynthesis; ubiquinone biosynthesis [regulation]. Its function is as follows. Is probably a protein kinase regulator of UbiI activity which is involved in aerobic coenzyme Q (ubiquinone) biosynthesis. The protein is Probable protein kinase UbiB of Shewanella piezotolerans (strain WP3 / JCM 13877).